A 172-amino-acid chain; its full sequence is Cell division protein SepF (172 aa).

The segment at 18-73 (RRYDEEDLPDEELTTEVYSDDGYEPSSEVTQLHHHDSNEQHARGHKAVQHRRRSEL) is disordered. Residues 22-40 (EEDLPDEELTTEVYSDDGY) show a composition bias toward acidic residues. Positions 48-59 (QLHHHDSNEQHA) are enriched in basic and acidic residues. Residues 60 to 70 (RGHKAVQHRRR) are compositionally biased toward basic residues.

The protein belongs to the SepF family. Homodimer. Interacts with FtsZ.

The protein resides in the cytoplasm. In terms of biological role, cell division protein that is part of the divisome complex and is recruited early to the Z-ring. Probably stimulates Z-ring formation, perhaps through the cross-linking of FtsZ protofilaments. Its function overlaps with FtsA. The sequence is that of Cell division protein SepF from Cutibacterium acnes (strain DSM 16379 / KPA171202) (Propionibacterium acnes).